Reading from the N-terminus, the 513-residue chain is ATP synthase subunit alpha (513 aa).

169-176 (GDRQTGKT) lines the ATP pocket.

This sequence belongs to the ATPase alpha/beta chains family. As to quaternary structure, F-type ATPases have 2 components, CF(1) - the catalytic core - and CF(0) - the membrane proton channel. CF(1) has five subunits: alpha(3), beta(3), gamma(1), delta(1), epsilon(1). CF(0) has three main subunits: a(1), b(2) and c(9-12). The alpha and beta chains form an alternating ring which encloses part of the gamma chain. CF(1) is attached to CF(0) by a central stalk formed by the gamma and epsilon chains, while a peripheral stalk is formed by the delta and b chains.

The protein localises to the cell inner membrane. The catalysed reaction is ATP + H2O + 4 H(+)(in) = ADP + phosphate + 5 H(+)(out). Functionally, produces ATP from ADP in the presence of a proton gradient across the membrane. The alpha chain is a regulatory subunit. This chain is ATP synthase subunit alpha, found in Klebsiella pneumoniae (strain 342).